The primary structure comprises 231 residues: Protein N-terminal glutamine amidohydrolase (231 aa).

The interval 1–21 (MADDRVAGGATPPPPPPPPPL) is disordered. Positions 11–21 (TPPPPPPPPPL) are enriched in pro residues. Active-site residues include Cys33, His89, and Asp108.

It belongs to the NTAQ1 family. As to quaternary structure, monomer.

The enzyme catalyses N-terminal L-glutaminyl-[protein] + H2O = N-terminal L-glutamyl-[protein] + NH4(+). Its function is as follows. Mediates the side-chain deamidation of N-terminal glutamine residues to glutamate, an important step in N-end rule pathway of protein degradation. Conversion of the resulting N-terminal glutamine to glutamate renders the protein susceptible to arginylation, polyubiquitination and degradation as specified by the N-end rule. Does not act on substrates with internal or C-terminal glutamine and does not act on non-glutamine residues in any position. This chain is Protein N-terminal glutamine amidohydrolase, found in Oryza sativa subsp. indica (Rice).